Here is a 415-residue protein sequence, read N- to C-terminus: Serine hydroxymethyltransferase (415 aa).

(6S)-5,6,7,8-tetrahydrofolate contacts are provided by residues L121 and G125–L127. N6-(pyridoxal phosphate)lysine is present on K229. T352 to F354 is a binding site for (6S)-5,6,7,8-tetrahydrofolate.

Belongs to the SHMT family. Homodimer. Requires pyridoxal 5'-phosphate as cofactor.

It localises to the cytoplasm. The catalysed reaction is (6R)-5,10-methylene-5,6,7,8-tetrahydrofolate + glycine + H2O = (6S)-5,6,7,8-tetrahydrofolate + L-serine. It functions in the pathway one-carbon metabolism; tetrahydrofolate interconversion. It participates in amino-acid biosynthesis; glycine biosynthesis; glycine from L-serine: step 1/1. Functionally, catalyzes the reversible interconversion of serine and glycine with tetrahydrofolate (THF) serving as the one-carbon carrier. This reaction serves as the major source of one-carbon groups required for the biosynthesis of purines, thymidylate, methionine, and other important biomolecules. Also exhibits THF-independent aldolase activity toward beta-hydroxyamino acids, producing glycine and aldehydes, via a retro-aldol mechanism. In Chromobacterium violaceum (strain ATCC 12472 / DSM 30191 / JCM 1249 / CCUG 213 / NBRC 12614 / NCIMB 9131 / NCTC 9757 / MK), this protein is Serine hydroxymethyltransferase.